We begin with the raw amino-acid sequence, 337 residues long: 4-hydroxyproline 2-epimerase 2 (337 aa).

Cys-90 (proton acceptor) is an active-site residue. Substrate is bound by residues 91–92 (GH), His-223, and Asp-249. Residue Cys-253 is the Proton donor of the active site. 254 to 255 (GT) lines the substrate pocket.

This sequence belongs to the proline racemase family.

It carries out the reaction trans-4-hydroxy-L-proline = cis-4-hydroxy-D-proline. Functionally, catalyzes the epimerization of trans-4-hydroxy-L-proline (t4LHyp) to cis-4-hydroxy-D-proline (c4DHyp). Is likely involved in a degradation pathway that converts t4LHyp to alpha-ketoglutarate. Can also catalyze the epimerization of trans-3-hydroxy-L-proline (t3LHyp) to cis-3-hydroxy-D-proline (c3DHyp), albeit with 170-fold lower efficiency. Displays no proline racemase activity. This chain is 4-hydroxyproline 2-epimerase 2, found in Brucella anthropi (strain ATCC 49188 / DSM 6882 / CCUG 24695 / JCM 21032 / LMG 3331 / NBRC 15819 / NCTC 12168 / Alc 37) (Ochrobactrum anthropi).